Reading from the N-terminus, the 287-residue chain is Syntaxin-11 (287 aa).

Residues 41 to 71 (LESLYRVIQDIQDENQLLLIDVRRLGRQNVR) are a coiled coil. One can recognise a t-SNARE coiled-coil homology domain in the interval 204 to 266 (LNEIESRHRE…GEAKAQVRKA (63 aa)).

This sequence belongs to the syntaxin family. In terms of assembly, interacts with the SNARE proteins SNAP-23 and VAMP.

The protein localises to the membrane. It localises to the golgi apparatus. Its subcellular location is the trans-Golgi network membrane. SNARE that acts to regulate protein transport between late endosomes and the trans-Golgi network. The chain is Syntaxin-11 (Stx11) from Mus musculus (Mouse).